We begin with the raw amino-acid sequence, 181 residues long: Crustacyanin-C1 subunit (181 aa).

3 disulfide bridges follow: Cys12–Cys121, Cys51–Cys173, and Cys117–Cys150.

The protein belongs to the calycin superfamily. Lipocalin family. In terms of assembly, oligomer; Can form dimers (beta-crustacyanin); or complexes of 16 subunits (alpha-crustacyanin). There are five types of subunits: A1, A2, A3, C1 and C2. In terms of tissue distribution, found in the carapace.

It is found in the secreted. The protein resides in the extracellular space. Binds the carotenoid astaxanthin (AXT) which provides the blue coloration to the carapace of the lobster. This chain is Crustacyanin-C1 subunit, found in Homarus gammarus (European lobster).